Consider the following 725-residue polypeptide: Fatty acid oxidation complex subunit alpha (725 aa).

Residues 1–189 (MLYKGDTLYL…KIGLVDGVVK (189 aa)) are enoyl-CoA hydratase/isomerase. Aspartate 296 contacts substrate. The interval 311–725 (ETPKQAAVLG…RLNQPVRLVL (415 aa)) is 3-hydroxyacyl-CoA dehydrogenase. Residues methionine 324, aspartate 343, 400 to 402 (VVE), lysine 407, and serine 429 each bind NAD(+). The active-site For 3-hydroxyacyl-CoA dehydrogenase activity is histidine 450. Asparagine 453 is a binding site for NAD(+). Substrate contacts are provided by asparagine 500 and tyrosine 660.

This sequence in the N-terminal section; belongs to the enoyl-CoA hydratase/isomerase family. The protein in the C-terminal section; belongs to the 3-hydroxyacyl-CoA dehydrogenase family. In terms of assembly, heterotetramer of two alpha chains (FadB) and two beta chains (FadA).

It carries out the reaction a (3S)-3-hydroxyacyl-CoA + NAD(+) = a 3-oxoacyl-CoA + NADH + H(+). The catalysed reaction is a (3S)-3-hydroxyacyl-CoA = a (2E)-enoyl-CoA + H2O. The enzyme catalyses a 4-saturated-(3S)-3-hydroxyacyl-CoA = a (3E)-enoyl-CoA + H2O. It catalyses the reaction (3S)-3-hydroxybutanoyl-CoA = (3R)-3-hydroxybutanoyl-CoA. It carries out the reaction a (3Z)-enoyl-CoA = a 4-saturated (2E)-enoyl-CoA. The catalysed reaction is a (3E)-enoyl-CoA = a 4-saturated (2E)-enoyl-CoA. It participates in lipid metabolism; fatty acid beta-oxidation. Involved in the aerobic and anaerobic degradation of long-chain fatty acids via beta-oxidation cycle. Catalyzes the formation of 3-oxoacyl-CoA from enoyl-CoA via L-3-hydroxyacyl-CoA. It can also use D-3-hydroxyacyl-CoA and cis-3-enoyl-CoA as substrate. This is Fatty acid oxidation complex subunit alpha from Salmonella paratyphi A (strain ATCC 9150 / SARB42).